The primary structure comprises 127 residues: Riboflavin kinase (127 aa).

10 to 15 (GLGEGR) lines the CDP pocket. 2 residues coordinate Mg(2+): Thr39 and Asn41. Residues Thr96 and Glu104 each contribute to the FMN site. 109–112 (IQLR) serves as a coordination point for CDP.

Belongs to the archaeal riboflavin kinase family. Mg(2+) is required as a cofactor.

It catalyses the reaction riboflavin + CTP = CDP + FMN + H(+). The protein operates within cofactor biosynthesis; FMN biosynthesis; FMN from riboflavin (CTP route): step 1/1. Its function is as follows. Catalyzes the CTP-dependent phosphorylation of riboflavin (vitamin B2) to form flavin mononucleotide (FMN). The chain is Riboflavin kinase from Methanococcus maripaludis (strain C5 / ATCC BAA-1333).